A 461-amino-acid polypeptide reads, in one-letter code: Pup--protein ligase (461 aa).

Position 9 (Glu-9) interacts with Mg(2+). An ATP-binding site is contributed by Arg-53. Tyr-55 is a binding site for Mg(2+). Residue Asp-57 is the Proton acceptor of the active site. Glu-63 contributes to the Mg(2+) binding site. ATP contacts are provided by Thr-66 and Trp-420.

This sequence belongs to the Pup ligase/Pup deamidase family. Pup-conjugating enzyme subfamily.

It carries out the reaction ATP + [prokaryotic ubiquitin-like protein]-L-glutamate + [protein]-L-lysine = ADP + phosphate + N(6)-([prokaryotic ubiquitin-like protein]-gamma-L-glutamyl)-[protein]-L-lysine.. It functions in the pathway protein degradation; proteasomal Pup-dependent pathway. It participates in protein modification; protein pupylation. In terms of biological role, catalyzes the covalent attachment of the prokaryotic ubiquitin-like protein modifier Pup to the proteasomal substrate proteins, thereby targeting them for proteasomal degradation. This tagging system is termed pupylation. The ligation reaction involves the side-chain carboxylate of the C-terminal glutamate of Pup and the side-chain amino group of a substrate lysine. This chain is Pup--protein ligase, found in Renibacterium salmoninarum (strain ATCC 33209 / DSM 20767 / JCM 11484 / NBRC 15589 / NCIMB 2235).